The sequence spans 631 residues: BTB/POZ domain-containing protein At1g67900 (631 aa).

The 66-residue stretch at 28-93 folds into the BTB domain; sequence SDFTIEVSGS…CYGITITISA (66 aa). Residues 200-509 form the NPH3 domain; sequence GWWAEDIAEL…VQVLFYEQAR (310 aa). The tract at residues 361–399 is disordered; it reads QTSPPTSPLRGKKGMMDRRRRSRSAENIDLEFQESRRSS. Over residues 370–382 the composition is skewed to basic residues; it reads RGKKGMMDRRRRS. Tyr-450 carries the phosphotyrosine modification. Ser-567 is subject to Phosphoserine.

It belongs to the NPH3 family.

Its pathway is protein modification; protein ubiquitination. Functionally, may act as a substrate-specific adapter of an E3 ubiquitin-protein ligase complex (CUL3-RBX1-BTB) which mediates the ubiquitination and subsequent proteasomal degradation of target proteins. The chain is BTB/POZ domain-containing protein At1g67900 from Arabidopsis thaliana (Mouse-ear cress).